The primary structure comprises 411 residues: E3 ubiquitin-protein ligase PUB23 (411 aa).

Residues 11–86 (EIPPFFLCPI…QSWCTLNASY (76 aa)) form the U-box domain. ARM repeat units lie at residues 132 to 173 (ATNK…HLET), 175 to 203 (ETVLKNLLNNKKDNNIVKSLTKIMQRGMY), 221 to 261 (DPMQ…NICP), and 263 to 306 (GRNR…LLCQ).

In terms of assembly, interacts with RPN12A. In terms of processing, auto-ubiquitinated.

The protein resides in the cytoplasm. The enzyme catalyses S-ubiquitinyl-[E2 ubiquitin-conjugating enzyme]-L-cysteine + [acceptor protein]-L-lysine = [E2 ubiquitin-conjugating enzyme]-L-cysteine + N(6)-ubiquitinyl-[acceptor protein]-L-lysine.. It functions in the pathway protein modification; protein ubiquitination. Its function is as follows. E3 ubiquitin-protein ligase that negatively regulates water stress response. May control in coordination with PUB23 a drought signaling pathway by ubiquitinating cytosolic RPN12a. Acts as a negative regulator of the immunity triggered by the pathogen-associated molecular patterns (PAMPs), in association with PUB22 and PUB24. This chain is E3 ubiquitin-protein ligase PUB23 (PUB23), found in Arabidopsis thaliana (Mouse-ear cress).